Reading from the N-terminus, the 118-residue chain is Large ribosomal subunit protein bL20 (118 aa).

Belongs to the bacterial ribosomal protein bL20 family.

In terms of biological role, binds directly to 23S ribosomal RNA and is necessary for the in vitro assembly process of the 50S ribosomal subunit. It is not involved in the protein synthesizing functions of that subunit. This is Large ribosomal subunit protein bL20 from Aliarcobacter butzleri (strain RM4018) (Arcobacter butzleri).